The primary structure comprises 666 residues: Asperfuranone cluster transcription factor afoA (666 aa).

Residues 16-43 constitute a DNA-binding region (zn(2)-C6 fungal-type); sequence CEECRRRKARCDRVRPKCGFCTENELQC. Disordered regions lie at residues 184-206 and 347-373; these read LSFD…STTR and AGSD…GENA. The span at 353–369 shows a compositional bias: low complexity; it reads LSPPSSSPPSSLTLSPS.

It is found in the nucleus. Functionally, transcription factor that regulates the expression of the gene cluster that mediates the biosynthesis of asperfuranone, a probable antitumor agent. The protein is Asperfuranone cluster transcription factor afoA of Emericella nidulans (strain FGSC A4 / ATCC 38163 / CBS 112.46 / NRRL 194 / M139) (Aspergillus nidulans).